The following is a 189-amino-acid chain: Peptidyl-tRNA hydrolase (189 aa).

Tyrosine 15 serves as a coordination point for tRNA. Catalysis depends on histidine 20, which acts as the Proton acceptor. Residues phenylalanine 66, asparagine 68, and asparagine 114 each coordinate tRNA.

This sequence belongs to the PTH family. As to quaternary structure, monomer.

It is found in the cytoplasm. The catalysed reaction is an N-acyl-L-alpha-aminoacyl-tRNA + H2O = an N-acyl-L-amino acid + a tRNA + H(+). Functionally, hydrolyzes ribosome-free peptidyl-tRNAs (with 1 or more amino acids incorporated), which drop off the ribosome during protein synthesis, or as a result of ribosome stalling. Its function is as follows. Catalyzes the release of premature peptidyl moieties from peptidyl-tRNA molecules trapped in stalled 50S ribosomal subunits, and thus maintains levels of free tRNAs and 50S ribosomes. This is Peptidyl-tRNA hydrolase from Streptococcus equi subsp. zooepidemicus (strain MGCS10565).